A 618-amino-acid polypeptide reads, in one-letter code: Phostensin (618 aa).

Residues 15–33 are compositionally biased toward basic and acidic residues; it reads RRQEEAAVRGREKAERERL. A disordered region spans residues 15–505; sequence RRQEEAAVRG…PATADAAVPG (491 aa). Residue serine 54 is modified to Phosphoserine. The segment covering 96–109 has biased composition (low complexity); that stretch reads QQQQQQQQQQQQQQ. Basic and acidic residues-rich tracts occupy residues 110 to 160 and 173 to 197; these read RSEE…ERRL and LESR…EVRK. Phosphoserine is present on residues serine 131, serine 139, serine 181, and serine 201. Threonine 205 carries the post-translational modification Phosphothreonine. Serine 231 carries the phosphoserine modification. 2 stretches are compositionally biased toward basic and acidic residues: residues 234-245 and 271-289; these read DSDHEKLGLTDA and SGEE…EERT. Over residues 308-319 the composition is skewed to low complexity; it reads EAAGSSSGGVEA. Residues 348-358 are compositionally biased toward basic and acidic residues; sequence KVRDRTPRDTE. Pro residues predominate over residues 429-451; sequence RPPPAAPLSPPPPAPPAPQPPGD. Position 437 is a phosphoserine (serine 437). Lysine 462 is modified (N6-acetyllysine). Positions 485–505 are enriched in low complexity; sequence APPAAAATPATPATADAAVPG. A Phosphoserine modification is found at serine 535. The segment at 556–594 is disordered; that stretch reads YQYPSESSVLEELGPEPEAPSAPSPPAAQPDDEEDEEEL. The span at 572–583 shows a compositional bias: pro residues; the sequence is PEAPSAPSPPAA. A compositionally biased stretch (acidic residues) spans 585-594; sequence PDDEEDEEEL.

In terms of assembly, interacts with Protein phosphatase 1 (PP1).

The protein resides in the cytoplasm. The protein localises to the cytoskeleton. Its function is as follows. May target protein phosphatase 1 to F-actin cytoskeleton. The chain is Phostensin (PPP1R18) from Sus scrofa (Pig).